The sequence spans 937 residues: MSMNRREFLKTTAAAAAASAVGISIPSEAKAAAENTQAGWQWDKAVCRFCGTGCGIMVAVKDDKIVAVKGDPESPVNRGINCIKGYFNAKIMYGADRLTQPLLRMNDKGEFDKNGKFRPVSWKRAFDEMEKQFKKYYNELGPTGVAVFGSGQYTIQEGYAAVKLVKAGWRSNNIDPNARHCMASAVVGFYQTFGIDEPAGCYDDIEITDTVFVWGANMAEMHPILWSRVSDAKLNNPDKYFIVNLSTYRNRCSNLADMEIIFRPNADLAIMNYLGREILKRNAVNWDFVKKHTIFATGHADIGYGMRNPNSPHVTDKERDTVAKQVAKVVTEEEAVALSPIGKWKAGDEMQMTHTAGKKPFWHWQISFDDFKKAVEPYTLDYVAKVAKGDPDESLDSFKRKLQKLADLYCDPNRKALSFWTMGFNQHVRGSWINELVYMVHLLLGKQSQPGSGAFSLTGQPSACGTAREVGTFAHRLPADMLVGNPKHRKITEKMWKIPEGTLNPKVGSHFLKIMRDIEDGKIKWAWVHVNNPWQNTANANHWIKAARTMDNFIVVNEAYPGVSARVADLILPVSMIYEKWGAYGNAERRTQHWRQQVTPPGEAMPDLWTIMEFSKRFKLKEVWKAHPQAKLPSVLDKAQAMGYDPEMTLFDVLFNRPEYRKNFPWPDPIAKNPQTGKLHANTEAGGDGRTIIGADGKEWKGYGFFVHKALWEEYRKFGLGHAHDLADFDTYHKVRGLRWPVVNGKETKWRFNAEYDPYARKYAKPGEKFAFYGPLLKALKRGDLKGPKTKQKYSLKNKAKIFWRPFMVHPEDPKYDTKGYNFWLCTGRVLEHWHSGTMTMRVPELYRAMPEALCYMNPKDAKELGLNRFDLVVVESRRGKVKARVETRGRNKPPRGLVYVPWFDEKVLINKVCLDATCPLSKETDYKKAAVKVYKA.

A signal peptide (tat-type signal) is located at residues 1 to 31; it reads MSMNRREFLKTTAAAAAASAVGISIPSEAKA. Residues 40 to 96 form the 4Fe-4S Mo/W bis-MGD-type domain; sequence WQWDKAVCRFCGTGCGIMVAVKDDKIVAVKGDPESPVNRGINCIKGYFNAKIMYGAD. Cys-47, Cys-50, Cys-54, and Cys-82 together coordinate [4Fe-4S] cluster. Residues Lys-84, Gln-152, Asn-177, Cys-181, 214–221, Met-422, Gln-426, Asn-532, Lys-580, Asp-607, and 827–836 each bind Mo-bis(molybdopterin guanine dinucleotide); these read WGANMAEM and TGRVLEHWHS. Trp-903 lines the substrate pocket. Mo-bis(molybdopterin guanine dinucleotide) contacts are provided by Asn-911 and Lys-928.

The protein belongs to the prokaryotic molybdopterin-containing oxidoreductase family. NasA/NapA/NarB subfamily. As to quaternary structure, component of the periplasmic nitrate reductase NapAB complex composed of NapA and NapB. The cofactor is [4Fe-4S] cluster. It depends on Mo-bis(molybdopterin guanine dinucleotide) as a cofactor. Post-translationally, predicted to be exported by the Tat system. The position of the signal peptide cleavage has not been experimentally proven.

The protein localises to the periplasm. It catalyses the reaction 2 Fe(II)-[cytochrome] + nitrate + 2 H(+) = 2 Fe(III)-[cytochrome] + nitrite + H2O. Its function is as follows. Catalytic subunit of the periplasmic nitrate reductase complex NapAB. Receives electrons from NapB and catalyzes the reduction of nitrate to nitrite. The chain is Periplasmic nitrate reductase from Nautilia profundicola (strain ATCC BAA-1463 / DSM 18972 / AmH).